Reading from the N-terminus, the 276-residue chain is Large ribosomal subunit protein uL2 (276 aa).

The tract at residues 224–276 (AMNPVDHPLGGGEGKSSGGRHPVTPWGKPTKGYKTRNKKKPSSKLIVKRRGQK) is disordered. Residues 254–276 (KGYKTRNKKKPSSKLIVKRRGQK) show a composition bias toward basic residues.

The protein belongs to the universal ribosomal protein uL2 family. In terms of assembly, part of the 50S ribosomal subunit. Forms a bridge to the 30S subunit in the 70S ribosome.

In terms of biological role, one of the primary rRNA binding proteins. Required for association of the 30S and 50S subunits to form the 70S ribosome, for tRNA binding and peptide bond formation. It has been suggested to have peptidyltransferase activity; this is somewhat controversial. Makes several contacts with the 16S rRNA in the 70S ribosome. The sequence is that of Large ribosomal subunit protein uL2 from Solidesulfovibrio magneticus (strain ATCC 700980 / DSM 13731 / RS-1) (Desulfovibrio magneticus).